A 116-amino-acid polypeptide reads, in one-letter code: uncharacterized protein (116 aa).

Positions 6-60 (LKKCRKQKKLTQQNMADKLGITRPAYTAYELGSREPDYKTLINISNILDVSLDYL) constitute an HTH cro/C1-type domain. The segment at residues 17 to 36 (QQNMADKLGITRPAYTAYEL) is a DNA-binding region (H-T-H motif).

This is an uncharacterized protein from Bacillus subtilis (strain 168).